Consider the following 166-residue polypeptide: MAAPSGGFWTAVVLAAAALKLAAAVSEPTTVPFDVRPGGVVHSFSQDVGPGNKFTCTFTYASQGGTNEQWQMSLGTSEDSQHFTCTIWRPQGKSYLYFTQFKAELRGAEIEYAMAYSKAAFERESDVPLKSEEFEVTKTAVSHRPGAFKAELSKLVIVAKAARSEL.

The first 24 residues, 1–24, serve as a signal peptide directing secretion; sequence MAAPSGGFWTAVVLAAAALKLAAA.

This sequence belongs to the MYDGF family. In terms of tissue distribution, expressed in prostate, spleen and lung, and weakly expressed in the left ventricle (LF) and liver. Expressed predominantly in inflammatory cells, such as monocytes and macrophages, and weakly expressed in neutrophils, T-cells, B-cells, endothelial cells and cardiac myocytes, after myocardial infarction (MI) (at protein level).

It is found in the secreted. The protein resides in the endoplasmic reticulum-Golgi intermediate compartment. Its subcellular location is the endoplasmic reticulum. It localises to the golgi apparatus. Functionally, bone marrow-derived monocyte and paracrine-acting protein that promotes cardiac myocyte survival and adaptive angiogenesis for cardiac protection and/or repair after myocardial infarction (MI). Stimulates endothelial cell proliferation through a MAPK1/3-, STAT3- and CCND1-mediated signaling pathway. Inhibits cardiac myocyte apoptosis in a PI3K/AKT-dependent signaling pathway. In Mus musculus (Mouse), this protein is Myeloid-derived growth factor.